Here is a 570-residue protein sequence, read N- to C-terminus: Periplasmic trehalase (570 aa).

An N-terminal signal peptide occupies residues 1–34 (MIPPEIRRSVLLQKAIKLALAGTLLTFASFSATA). Substrate is bound by residues Arg159, 166-167 (WD), Asn203, 212-214 (RSQ), 284-286 (RPE), and Gly317. Active-site proton donor/acceptor residues include Asp319 and Glu503. Glu518 contacts substrate. A disordered region spans residues 544–570 (KPCDSVPSTRPASLSATPTKTPSAATQ). Positions 554–570 (PASLSATPTKTPSAATQ) are enriched in low complexity.

The protein belongs to the glycosyl hydrolase 37 family. As to quaternary structure, monomer.

It is found in the periplasm. It carries out the reaction alpha,alpha-trehalose + H2O = alpha-D-glucose + beta-D-glucose. Functionally, provides the cells with the ability to utilize trehalose at high osmolarity by splitting it into glucose molecules that can subsequently be taken up by the phosphotransferase-mediated uptake system. This is Periplasmic trehalase from Salmonella paratyphi A (strain AKU_12601).